The following is a 598-amino-acid chain: Aspartate--tRNA(Asp/Asn) ligase (598 aa).

Glutamate 173 contacts L-aspartate. Residues 197-200 are aspartate; the sequence is QLFK. Residue arginine 219 participates in L-aspartate binding. Residues 219–221 and glutamine 228 contribute to the ATP site; that span reads RDE. Residue histidine 448 participates in L-aspartate binding. Glutamate 482 contributes to the ATP binding site. Arginine 489 provides a ligand contact to L-aspartate. 534–537 serves as a coordination point for ATP; the sequence is GWDR. The disordered stretch occupies residues 560–598; it reads GYDPLTAAPAPITAQQRKEAGVDAKPETKKAAAGEPAGA. A compositionally biased stretch (basic and acidic residues) spans 575 to 591; that stretch reads QRKEAGVDAKPETKKAA.

This sequence belongs to the class-II aminoacyl-tRNA synthetase family. Type 1 subfamily. In terms of assembly, homodimer.

It is found in the cytoplasm. The catalysed reaction is tRNA(Asx) + L-aspartate + ATP = L-aspartyl-tRNA(Asx) + AMP + diphosphate. Aspartyl-tRNA synthetase with relaxed tRNA specificity since it is able to aspartylate not only its cognate tRNA(Asp) but also tRNA(Asn). Reaction proceeds in two steps: L-aspartate is first activated by ATP to form Asp-AMP and then transferred to the acceptor end of tRNA(Asp/Asn). This chain is Aspartate--tRNA(Asp/Asn) ligase, found in Kineococcus radiotolerans (strain ATCC BAA-149 / DSM 14245 / SRS30216).